The following is a 160-amino-acid chain: MKKLAIMAAASMVFAVSSAHAGFTPSGTTGTTKLTVTEECQVRVGDLTVAKTRGQLTDAAPIGPVTVQALGCNARQVALKADTDNFEQGKFFLISDNNRDKLYVNIRPMDNSAWTTDNGVFYKNDVGSWGGTIGIYVDGQQTNTPPGNYTLTLTGGYWAK.

Positions 1–21 are cleaved as a signal peptide; that stretch reads MKKLAIMAAASMVFAVSSAHA. Residues 22-75 are receptor-binding; the sequence is GFTPSGTTGTTKLTVTEECQVRVGDLTVAKTRGQLTDAAPIGPVTVQALGCNAR.

Belongs to the Dr-adhesin family.

The protein resides in the fimbrium. Its function is as follows. Hemagglutinins of uropathogenic E.coli mediate adherence to the upper urinary tract. These adhesins bind to the Dr blood group antigen and also agglutinate human erythrocytes in the presence of D-mannose (mannose-resistant hemagglutination (MRHA)). This chain is Afimbrial adhesin AFA-III (afaE3), found in Escherichia coli.